The chain runs to 1695 residues: Protein TOPAZ1 (1695 aa).

Disordered regions lie at residues 1 to 128 (MRRH…DDPQ), 441 to 474 (MAQT…ELRR), and 725 to 753 (AEVR…NSVT). Residues 43–52 (RRKNRQKRRM) show a composition bias toward basic residues. Basic and acidic residues-rich tracts occupy residues 59–68 (GKDKVERDRS), 92–113 (SDRR…ERHT), and 459–474 (NEYH…ELRR). Polar residues predominate over residues 735–753 (SVSMTTSGPQTLSIQNSVT).

Its subcellular location is the cytoplasm. The protein resides in the cytosol. Important for normal spermatogenesis and male fertility. Specifically required for progression to the post-meiotic stages of spermatocyte development. Seems to be necessary for normal expression levels of a number of testis-expressed gene transcripts, although its role in this process is unclear. The sequence is that of Protein TOPAZ1 (TOPAZ1) from Callithrix jacchus (White-tufted-ear marmoset).